We begin with the raw amino-acid sequence, 391 residues long: Large ribosomal subunit protein uL3 (391 aa).

Positions 1–10 are enriched in basic and acidic residues; sequence MSHRKFEAPR. Positions 1–41 are disordered; that stretch reads MSHRKFEAPRHGSLGFRPRRRTRHHRGRCRSFPKDDPSKKP. The segment covering 17 to 31 has biased composition (basic residues); it reads RPRRRTRHHRGRCRS.

The protein belongs to the universal ribosomal protein uL3 family.

It is found in the cytoplasm. Its function is as follows. The L3 protein is a component of the large subunit of cytoplasmic ribosomes. This Tetrahymena thermophila protein is Large ribosomal subunit protein uL3 (RPL3).